A 1395-amino-acid polypeptide reads, in one-letter code: G-protein coupled receptor-associated sorting protein 1 (1395 aa).

Disordered stretches follow at residues 1-25 (MTGAEIESGAQVKPEKKPGEEVVGG), 45-83 (QIMPGARPKNKSKVMPGASTKVETSAVGGARPKSKAKAI), and 269-288 (TNTWSGPREDPNSRSRFRSK). Residues 269–281 (TNTWSGPREDPNS) are compositionally biased toward basic and acidic residues. Ser-297 carries the phosphoserine modification. Residues 446–469 (SMGTGASSKSRPRTDGERIGDSLF) are disordered. Residues 457-469 (PRTDGERIGDSLF) show a composition bias toward basic and acidic residues. Phosphoserine is present on residues Ser-631 and Ser-899. The tract at residues 899–1395 (SETEEETIFG…QNDPEGDQEN (497 aa)) is OPRD1-binding.

This sequence belongs to the GPRASP family. Interacts with cytoplasmic tails of a variety of G-protein coupled receptors such as D2 dopamine receptor/DRD2, delta opioid receptor/OPRD1, beta-2 adrenergic receptor/ADRB2 and D4 dopamine receptor/DRD4. Interacts with PER1. Interacts with BECN2; the interaction is direct. As to expression, expressed in the brain, with lower expression in medulla, spinal cord and substantia nigra.

The protein localises to the cytoplasm. Functionally, modulates lysosomal sorting and functional down-regulation of a variety of G-protein coupled receptors. Targets receptors for degradation in lysosomes via its interaction with BECN2. This Homo sapiens (Human) protein is G-protein coupled receptor-associated sorting protein 1 (GPRASP1).